Consider the following 104-residue polypeptide: uncharacterized protein (104 aa).

Transmembrane regions (helical) follow at residues 26-46 (IGTG…FTFF) and 70-90 (GLLG…IIAI).

The protein resides in the membrane. This is an uncharacterized protein from Acanthamoeba polyphaga mimivirus (APMV).